A 478-amino-acid chain; its full sequence is Proline--tRNA ligase (478 aa).

It belongs to the class-II aminoacyl-tRNA synthetase family. ProS type 3 subfamily. As to quaternary structure, homodimer.

The protein localises to the cytoplasm. The catalysed reaction is tRNA(Pro) + L-proline + ATP = L-prolyl-tRNA(Pro) + AMP + diphosphate. Functionally, catalyzes the attachment of proline to tRNA(Pro) in a two-step reaction: proline is first activated by ATP to form Pro-AMP and then transferred to the acceptor end of tRNA(Pro). The polypeptide is Proline--tRNA ligase (Clostridium botulinum (strain 657 / Type Ba4)).